The chain runs to 179 residues: Adenine phosphoribosyltransferase (179 aa).

Belongs to the purine/pyrimidine phosphoribosyltransferase family. As to quaternary structure, homodimer.

The protein resides in the cytoplasm. The catalysed reaction is AMP + diphosphate = 5-phospho-alpha-D-ribose 1-diphosphate + adenine. It functions in the pathway purine metabolism; AMP biosynthesis via salvage pathway; AMP from adenine: step 1/1. Functionally, catalyzes a salvage reaction resulting in the formation of AMP, that is energically less costly than de novo synthesis. The sequence is that of Adenine phosphoribosyltransferase from Helicobacter pylori (strain J99 / ATCC 700824) (Campylobacter pylori J99).